The chain runs to 270 residues: Nodule lectin (270 aa).

The signal sequence occupies residues 1 to 33 (MAFYRTNLPTRELFSLVSVVIVLLATNINSVQA). The propeptide occupies 34 to 41 (LSFNFTKL). Asparagine 134 is a glycosylation site (N-linked (GlcNAc...) asparagine).

The protein belongs to the leguminous lectin family. In terms of processing, glycosylated in a boron-dependent manner. Glycosylation is required for localization to symbiosomes. 3 different glycosylation variants, NLEC-1A, NLEC-1B and NLEC-1C, have been identified. Expressed in nodules of Rhizobium-infected and uninfected roots and in the root stele near the nodule attachment point. In roots which have been colonized by the endomycorrhizal fungus G.versiforme, detected only in cortical cells colonized by the fungus, mainly those containing arbuscules.

The protein resides in the symbiosome. It localises to the peribacteroid space. The protein localises to the peribacteroid membrane. Its function is as follows. Involved in symbiosome development. The polypeptide is Nodule lectin (NLEC1) (Pisum sativum (Garden pea)).